A 1199-amino-acid chain; its full sequence is MAGHLVNYGKHRTRRSYARIKEVLDLPNLIEIQTNSYQWFLDEGLKEMFDDIMPIDDFQGKLSLEFVGYQLLEPKYTVEEARQHDANYSAPLHVTLRLTNHETGEIKSQDVFFGDFPLMTKQGTFIINGAERVIVSQLVRSPGVYFHSETDKNSRVTYGTTVIPNRGAWLEYETDAKDIAYVRIDRTRKIPLTELVRALGFGSDQDIINMFGDNDSLMLTLEKDVHKNTDDSRTDEALKDIYERLRPGEPKTADSSRSLLYARFFDPKRYDLASVGRYKVNKKLSLKTRLLNQVLAETLADPDTGEVIAQKGTKVDRQVMDKLAPYLDRDDFKTITYQPSDQGVVTDPIELQSIKVYSQVTPDKEINLIGNGHIGKKVKHIVPADVLASMNYFLNLQEGLGSIDDIDHLGNRRIRSVGELLQNQFRIGLSRMERVVRERMSIQDTATVTPQQLINIRPVVASIKEFFGSSQLSQFMDQTNPLGELTHKRRLSALGPGGLTRDRAGYEVRDVHYTHYGRMCPIETPEGPNIGLINSLASYAVVNPYGFIETPYRRVSWDTHKVTDKIDYLTADEEDNYIVAQANSPLNDDGSFVDETVLARHKDNNIEISPDKVDYMDVSPKQVVAVATACIPFLENDDSNRALMGANMQRQAVPLVNPHAPLVGTGMEYKAAHDSGTAVLANNAGTVEYVDAKQIRVRREDGALDAYNLMKFKRSNAGKNYNQRPIVTIGDHVDVDEIIADGPAMQNGELALGQNPIIAFMTWNMYNYEDAIVLSERLVKDDVYTSIHIEEYESEARDTKLGPEEVTREIPNVGEEALKDLDEFGVVRVGAEVRDGDILVGKVTPKGVTELSAEERLLHAIFGEKAREVRDTSLRVPHGGGGIIQDVKIFTREAGDELSPGVNMMVRVYITQKRKIQVGDKMAGRHGNKGTVSVVVPEEDMPYLPDGTPVDICLSPMGVPSRMNIGQVLELHLGMAARNLGIHVATPVFDGANDKDLWATVKEAGMASDGKSVLYDGRTGEPFENRVSVGIMYYMKLSHMVDDKIHARSIGPYSLVTQQPLGGKAQFGGQRFGEMEVWALEAYGAAYTLQEILTYKSDDVVGRVKTYEAIVKGEPIPKPGVPESFRVLVKELQALGLDMKVLGADKKEIELRDMDDDEDDIVSVDALAKFAAQQEEKKAHEAAAQATDGKSANSTDDKK.

The segment at Glu-1175–Lys-1199 is disordered. Positions Asp-1188–Lys-1199 are enriched in polar residues.

The protein belongs to the RNA polymerase beta chain family. As to quaternary structure, the RNAP catalytic core consists of 2 alpha, 1 beta, 1 beta' and 1 omega subunit. When a sigma factor is associated with the core the holoenzyme is formed, which can initiate transcription.

The catalysed reaction is RNA(n) + a ribonucleoside 5'-triphosphate = RNA(n+1) + diphosphate. In terms of biological role, DNA-dependent RNA polymerase catalyzes the transcription of DNA into RNA using the four ribonucleoside triphosphates as substrates. The sequence is that of DNA-directed RNA polymerase subunit beta from Lacticaseibacillus paracasei (strain ATCC 334 / BCRC 17002 / CCUG 31169 / CIP 107868 / KCTC 3260 / NRRL B-441) (Lactobacillus paracasei).